Here is a 487-residue protein sequence, read N- to C-terminus: Cysteine--tRNA ligase (487 aa).

Cys-27 is a binding site for Zn(2+). The short motif at 29 to 39 (VTVYDLCHIGH) is the 'HIGH' region element. Positions 211, 236, and 240 each coordinate Zn(2+). The short motif at 268 to 272 (KMSKS) is the 'KMSKS' region element. Residue Lys-271 participates in ATP binding.

This sequence belongs to the class-I aminoacyl-tRNA synthetase family. Monomer. Zn(2+) serves as cofactor.

The protein localises to the cytoplasm. It catalyses the reaction tRNA(Cys) + L-cysteine + ATP = L-cysteinyl-tRNA(Cys) + AMP + diphosphate. The sequence is that of Cysteine--tRNA ligase from Thermodesulfovibrio yellowstonii (strain ATCC 51303 / DSM 11347 / YP87).